Consider the following 226-residue polypeptide: Large ribosomal subunit protein uL3 (226 aa).

It belongs to the universal ribosomal protein uL3 family. As to quaternary structure, part of the 50S ribosomal subunit. Forms a cluster with proteins L14 and L19.

Its function is as follows. One of the primary rRNA binding proteins, it binds directly near the 3'-end of the 23S rRNA, where it nucleates assembly of the 50S subunit. This Sulfurihydrogenibium sp. (strain YO3AOP1) protein is Large ribosomal subunit protein uL3.